Here is a 316-residue protein sequence, read N- to C-terminus: MAAKPPLTLYLAAPRGFCAGVDRAIKIVEMALEKWGAPVYVRHEIVHNKFVVDGLRDKGAVFVEELEECPDDRPVIFSAHGVPKSVPAAAEARQMVYVDATCPLVSKVHIEAQRHAEAGLQMIMIGHKGHPETVGTMGQLPEGEVLLVETVEDVAQVEVRDPERLAFVTQTTLSVDDTKDIVAALQARFPAIVGPHKEDICYATTNRQEAVKEVAPKADALLVVGAPNSSNSRRLVEVGAKNGCSYAQLVQRAENIDWRALEGIQSIAITAGASAPELLVNEVIDAFRDRYEVTVELVETAVERVEFKVPRVLRTA.

Cysteine 18 is a [4Fe-4S] cluster binding site. Positions 47 and 80 each coordinate (2E)-4-hydroxy-3-methylbut-2-enyl diphosphate. Dimethylallyl diphosphate-binding residues include histidine 47 and histidine 80. 2 residues coordinate isopentenyl diphosphate: histidine 47 and histidine 80. Cysteine 102 contributes to the [4Fe-4S] cluster binding site. Histidine 130 is a (2E)-4-hydroxy-3-methylbut-2-enyl diphosphate binding site. Histidine 130 provides a ligand contact to dimethylallyl diphosphate. Histidine 130 serves as a coordination point for isopentenyl diphosphate. The Proton donor role is filled by glutamate 132. Threonine 171 is a (2E)-4-hydroxy-3-methylbut-2-enyl diphosphate binding site. Cysteine 201 is a [4Fe-4S] cluster binding site. Residues serine 229, serine 230, asparagine 231, and serine 274 each contribute to the (2E)-4-hydroxy-3-methylbut-2-enyl diphosphate site. Dimethylallyl diphosphate is bound by residues serine 229, serine 230, asparagine 231, and serine 274. Isopentenyl diphosphate contacts are provided by serine 229, serine 230, asparagine 231, and serine 274.

The protein belongs to the IspH family. The cofactor is [4Fe-4S] cluster.

It catalyses the reaction isopentenyl diphosphate + 2 oxidized [2Fe-2S]-[ferredoxin] + H2O = (2E)-4-hydroxy-3-methylbut-2-enyl diphosphate + 2 reduced [2Fe-2S]-[ferredoxin] + 2 H(+). The enzyme catalyses dimethylallyl diphosphate + 2 oxidized [2Fe-2S]-[ferredoxin] + H2O = (2E)-4-hydroxy-3-methylbut-2-enyl diphosphate + 2 reduced [2Fe-2S]-[ferredoxin] + 2 H(+). It participates in isoprenoid biosynthesis; dimethylallyl diphosphate biosynthesis; dimethylallyl diphosphate from (2E)-4-hydroxy-3-methylbutenyl diphosphate: step 1/1. It functions in the pathway isoprenoid biosynthesis; isopentenyl diphosphate biosynthesis via DXP pathway; isopentenyl diphosphate from 1-deoxy-D-xylulose 5-phosphate: step 6/6. Functionally, catalyzes the conversion of 1-hydroxy-2-methyl-2-(E)-butenyl 4-diphosphate (HMBPP) into a mixture of isopentenyl diphosphate (IPP) and dimethylallyl diphosphate (DMAPP). Acts in the terminal step of the DOXP/MEP pathway for isoprenoid precursor biosynthesis. The protein is 4-hydroxy-3-methylbut-2-enyl diphosphate reductase of Ruegeria sp. (strain TM1040) (Silicibacter sp.).